The following is a 281-amino-acid chain: 32 kDa heat shock protein (281 aa).

The span at 142–168 (EDDEEIDSDEEFGDSDQDEEDSDDEEI) shows a compositional bias: acidic residues. Positions 142–281 (EDDEEIDSDE…NENNKKKQKN (140 aa)) are disordered. The segment covering 180–209 (KITEISEVPESKKEKTPEPKKVPEPKKEQV) has biased composition (basic and acidic residues). Over residues 210-273 (KQPTQPQQKK…NNKRPQNQNE (64 aa)) the composition is skewed to low complexity.

This chain is 32 kDa heat shock protein (hspC), found in Dictyostelium discoideum (Social amoeba).